Reading from the N-terminus, the 167-residue chain is Small ribosomal subunit protein uS5 (167 aa).

The 64-residue stretch at 12-75 folds into the S5 DRBM domain; it reads LEDNVVAINR…EAARKNLIEV (64 aa).

It belongs to the universal ribosomal protein uS5 family. In terms of assembly, part of the 30S ribosomal subunit. Contacts proteins S4 and S8.

Functionally, with S4 and S12 plays an important role in translational accuracy. In terms of biological role, located at the back of the 30S subunit body where it stabilizes the conformation of the head with respect to the body. The polypeptide is Small ribosomal subunit protein uS5 (Levilactobacillus brevis (strain ATCC 367 / BCRC 12310 / CIP 105137 / JCM 1170 / LMG 11437 / NCIMB 947 / NCTC 947) (Lactobacillus brevis)).